We begin with the raw amino-acid sequence, 605 residues long: Lysophospholipase 1 (605 aa).

A signal peptide spans 1–17 (MILHHLLILLIINYCVA). Positions 30–565 (SCPSSQLIRS…ENYCWDGTIY (536 aa)) constitute a PLA2c domain. 7 N-linked (GlcNAc...) asparagine glycosylation sites follow: Asn199, Asn261, Asn399, Asn451, Asn465, Asn492, and Asn573.

This sequence belongs to the lysophospholipase family.

Its subcellular location is the secreted. The enzyme catalyses a 1-acyl-sn-glycero-3-phosphocholine + H2O = sn-glycerol 3-phosphocholine + a fatty acid + H(+). Functionally, catalyzes the release of fatty acids from lysophospholipids. Phospholipase B may well contribute to pathogenicity by abetting the fungus in damaging and traversing host cell membranes, processes which likely increase the rapidity of disseminated infection. This is Lysophospholipase 1 from Candida albicans (strain SC5314 / ATCC MYA-2876) (Yeast).